We begin with the raw amino-acid sequence, 259 residues long: Ubiquinone/menaquinone biosynthesis C-methyltransferase UbiE (259 aa).

Residues threonine 82, aspartate 103, and 131–132 each bind S-adenosyl-L-methionine; that span reads NA.

This sequence belongs to the class I-like SAM-binding methyltransferase superfamily. MenG/UbiE family.

It carries out the reaction a 2-demethylmenaquinol + S-adenosyl-L-methionine = a menaquinol + S-adenosyl-L-homocysteine + H(+). The enzyme catalyses a 2-methoxy-6-(all-trans-polyprenyl)benzene-1,4-diol + S-adenosyl-L-methionine = a 5-methoxy-2-methyl-3-(all-trans-polyprenyl)benzene-1,4-diol + S-adenosyl-L-homocysteine + H(+). It participates in quinol/quinone metabolism; menaquinone biosynthesis; menaquinol from 1,4-dihydroxy-2-naphthoate: step 2/2. The protein operates within cofactor biosynthesis; ubiquinone biosynthesis. Functionally, methyltransferase required for the conversion of demethylmenaquinol (DMKH2) to menaquinol (MKH2) and the conversion of 2-polyprenyl-6-methoxy-1,4-benzoquinol (DDMQH2) to 2-polyprenyl-3-methyl-6-methoxy-1,4-benzoquinol (DMQH2). The sequence is that of Ubiquinone/menaquinone biosynthesis C-methyltransferase UbiE from Agrobacterium fabrum (strain C58 / ATCC 33970) (Agrobacterium tumefaciens (strain C58)).